Here is a 260-residue protein sequence, read N- to C-terminus: DNA repair protein RecO (260 aa).

Belongs to the RecO family.

Involved in DNA repair and RecF pathway recombination. This Ligilactobacillus salivarius (strain UCC118) (Lactobacillus salivarius) protein is DNA repair protein RecO.